The chain runs to 421 residues: uncharacterized protein (421 aa).

This sequence belongs to the glycosyltransferase 28 family.

This is an uncharacterized protein from Mycobacterium leprae (strain TN).